A 515-amino-acid chain; its full sequence is MEVLASSSLSPISFTKPNKINPNFSIQVKLWVKQPPKISKASKFSYARSRSNISRSNAANPGVVFVCNRFLCVIERNDQRKLSGKVMMKSSVNFRQNLSVALVRIVSVLLVSSISVVTTDSPPSWGLTEENLLFLEAWRTIDRAYIDKTFNGQSWFRYRETALRNEPMNTREETYMAIKKMVATLDDPFTRFLEPGKFKSLRSGTQGAVTGVGLSIGYPTASDGPPAGLVVISAAPGGPANRAGILPGDVIQGIDNTTTETLTIYDAAQMLQGPEGSAVELAIRSGPETRLLTLTRERVSVNPVKSRLCELPGSGSNSPKIGYIKLTTFNQNASSAVREAIETLRGNNVNAFVLDLRDNSGGSFPEGIEIAKFWLDKGVIVYICDSRGVRDIYDTDGSNAIATSEPLAVLVNKGTASASEILAGALKDNKRALVYGEPTYGKGKIQSVFELSDGSGLAVTVARYETPAHTDIDKVGVTPDHPLPKSFPKDEEAFCGCLKDPTAACYLNQGLLFSR.

The PDZ domain maps to 198-286 (FKSLRSGTQG…SAVELAIRSG (89 aa)). Residues serine 417 and lysine 442 each act as charge relay system in the active site.

Belongs to the peptidase S41A family.

The protein resides in the plastid. It localises to the chloroplast thylakoid lumen. It carries out the reaction The enzyme shows specific recognition of a C-terminal tripeptide, Xaa-Yaa-Zaa, in which Xaa is preferably Ala or Leu, Yaa is preferably Ala or Tyr, and Zaa is preferably Ala, but then cleaves at a variable distance from the C-terminus. A typical cleavage is -Ala-Ala-|-Arg-Ala-Ala-Lys-Glu-Asn-Tyr-Ala-Leu-Ala-Ala.. Functionally, protease involved in the C-terminal processing of the chloroplastic D1 protein of photosystem II. This proteolytic processing is necessary to allow the light-driven assembly of the tetranuclear manganese cluster, which is responsible for photosynthetic water oxidation. The protein is Carboxyl-terminal-processing peptidase 2, chloroplastic (CTPA2) of Arabidopsis thaliana (Mouse-ear cress).